The chain runs to 158 residues: Protein Smg homolog (158 aa).

Belongs to the Smg family.

The chain is Protein Smg homolog from Coxiella burnetii (strain RSA 331 / Henzerling II).